We begin with the raw amino-acid sequence, 641 residues long: Chaperone protein DnaK (641 aa).

Thr-200 is subject to Phosphothreonine; by autocatalysis. Low complexity predominate over residues 606 to 623 (AEQGGNADAASGNAQASK). Residues 606–628 (AEQGGNADAASGNAQASKAADDV) form a disordered region.

Belongs to the heat shock protein 70 family.

In terms of biological role, acts as a chaperone. The chain is Chaperone protein DnaK from Xanthomonas axonopodis pv. citri (strain 306).